The following is a 20-amino-acid chain: Thylakoid lumenal 14.7 kDa protein (20 aa).

Positions 1-20 are disordered; the sequence is KTGVNKPELLPKEETTVIDV. Positions 9–20 are enriched in basic and acidic residues; sequence LLPKEETTVIDV.

The protein resides in the plastid. The protein localises to the chloroplast thylakoid lumen. The protein is Thylakoid lumenal 14.7 kDa protein of Spinacia oleracea (Spinach).